The following is a 458-amino-acid chain: Transmembrane protein 135 (458 aa).

6 consecutive transmembrane segments (helical) span residues 68 to 88, 96 to 116, 149 to 169, 298 to 318, 331 to 351, and 377 to 397; these read ILQS…FFCI, FYSW…AILI, TLRN…MFFF, FQLG…SCFL, IVAG…TISM, and ADTI…VMEV.

It belongs to the TMEM135 family.

It is found in the mitochondrion membrane. The protein localises to the peroxisome membrane. Its function is as follows. Involved in mitochondrial metabolism by regulating the balance between mitochondrial fusion and fission. May act as a regulator of mitochondrial fission that promotes DNM1L-dependent fission through activation of DNM1L. May be involved in peroxisome organization. The polypeptide is Transmembrane protein 135 (Mus musculus (Mouse)).